The chain runs to 165 residues: Pyruvoyl-dependent arginine decarboxylase (165 aa).

Serine 53 is subject to Pyruvic acid (Ser).

The protein belongs to the PdaD family. In terms of assembly, trimer of an alpha-beta dimer. Pyruvate is required as a cofactor.

It carries out the reaction L-arginine + H(+) = agmatine + CO2. This is Pyruvoyl-dependent arginine decarboxylase (pdaD) from Methanocaldococcus jannaschii (strain ATCC 43067 / DSM 2661 / JAL-1 / JCM 10045 / NBRC 100440) (Methanococcus jannaschii).